A 391-amino-acid chain; its full sequence is Stearoyl-[acyl-carrier-protein] 9-desaturase 6, chloroplastic (391 aa).

The N-terminal 38 residues, 1–38 (MLAHKSLLSFTTQWATLMPSPSTFLASRPRGPAKISAV), are a transit peptide targeting the chloroplast. Fe cation is bound by residues Glu-130, Glu-168, His-171, Glu-221, Glu-254, and His-257.

The protein belongs to the fatty acid desaturase type 2 family. In terms of assembly, homodimer. Fe(2+) serves as cofactor.

It is found in the plastid. The protein resides in the chloroplast. It catalyses the reaction octadecanoyl-[ACP] + 2 reduced [2Fe-2S]-[ferredoxin] + O2 + 2 H(+) = (9Z)-octadecenoyl-[ACP] + 2 oxidized [2Fe-2S]-[ferredoxin] + 2 H2O. Its pathway is lipid metabolism; fatty acid metabolism. In terms of biological role, converts stearoyl-ACP to oleoyl-ACP by introduction of a cis double bond between carbons 9 and 10 of the acyl chain. The polypeptide is Stearoyl-[acyl-carrier-protein] 9-desaturase 6, chloroplastic (S-ACP-DES6) (Arabidopsis thaliana (Mouse-ear cress)).